The primary structure comprises 202 residues: Glycerol-3-phosphate acyltransferase (202 aa).

4 consecutive transmembrane segments (helical) span residues 1-21, 84-104, 116-136, and 143-163; these read MTLI…FGVL, AVAA…FLHF, ILLG…LAVA, and SLAA…FLGF.

This sequence belongs to the PlsY family. In terms of assembly, probably interacts with PlsX.

The protein resides in the cell inner membrane. It catalyses the reaction an acyl phosphate + sn-glycerol 3-phosphate = a 1-acyl-sn-glycero-3-phosphate + phosphate. The protein operates within lipid metabolism; phospholipid metabolism. In terms of biological role, catalyzes the transfer of an acyl group from acyl-phosphate (acyl-PO(4)) to glycerol-3-phosphate (G3P) to form lysophosphatidic acid (LPA). This enzyme utilizes acyl-phosphate as fatty acyl donor, but not acyl-CoA or acyl-ACP. In Nitrosospira multiformis (strain ATCC 25196 / NCIMB 11849 / C 71), this protein is Glycerol-3-phosphate acyltransferase.